A 337-amino-acid chain; its full sequence is 2-oxoglutarate-dependent ethylene/succinate-forming enzyme (337 aa).

The region spanning 166–286 (GWHHMRVLRF…RFACAYFHEP (121 aa)) is the Fe2OG dioxygenase domain. Fe cation-binding residues include His189 and His268.

It belongs to the iron/ascorbate-dependent oxidoreductase family. Monomer. It depends on Fe(2+) as a cofactor.

It catalyses the reaction 2-oxoglutarate + O2 + 2 H(+) = ethene + 3 CO2 + H2O. The catalysed reaction is L-arginine + 2-oxoglutarate + O2 = guanidine + L-glutamate 5-semialdehyde + succinate + CO2. It participates in alkene biosynthesis; ethylene biosynthesis via 2-oxoglutarate. Its function is as follows. Simultaneously catalyzes two reactions, namely formation of ethylene and of succinate from 2-oxoglutarate. This is 2-oxoglutarate-dependent ethylene/succinate-forming enzyme (efe) from Pseudomonas syringae pv. pisi.